A 255-amino-acid polypeptide reads, in one-letter code: Leucyl/phenylalanyl-tRNA--protein transferase (255 aa).

It belongs to the L/F-transferase family.

The protein resides in the cytoplasm. It carries out the reaction N-terminal L-lysyl-[protein] + L-leucyl-tRNA(Leu) = N-terminal L-leucyl-L-lysyl-[protein] + tRNA(Leu) + H(+). The enzyme catalyses N-terminal L-arginyl-[protein] + L-leucyl-tRNA(Leu) = N-terminal L-leucyl-L-arginyl-[protein] + tRNA(Leu) + H(+). The catalysed reaction is L-phenylalanyl-tRNA(Phe) + an N-terminal L-alpha-aminoacyl-[protein] = an N-terminal L-phenylalanyl-L-alpha-aminoacyl-[protein] + tRNA(Phe). Functions in the N-end rule pathway of protein degradation where it conjugates Leu, Phe and, less efficiently, Met from aminoacyl-tRNAs to the N-termini of proteins containing an N-terminal arginine or lysine. This Burkholderia thailandensis (strain ATCC 700388 / DSM 13276 / CCUG 48851 / CIP 106301 / E264) protein is Leucyl/phenylalanyl-tRNA--protein transferase.